Here is a 65-residue protein sequence, read N- to C-terminus: MSELLTIECPTCGKTVVWGEISPYRPFCSKRCQLIDLGQWANEEKRIPSQSENSDSDDWSGQPEQ.

Zn(2+) is bound by residues cysteine 9, cysteine 12, cysteine 28, and cysteine 32. Positions 43–65 are disordered; sequence EEKRIPSQSENSDSDDWSGQPEQ.

Belongs to the DNA gyrase inhibitor YacG family. As to quaternary structure, interacts with GyrB. Zn(2+) is required as a cofactor.

Its function is as follows. Inhibits all the catalytic activities of DNA gyrase by preventing its interaction with DNA. Acts by binding directly to the C-terminal domain of GyrB, which probably disrupts DNA binding by the gyrase. The protein is DNA gyrase inhibitor YacG of Photorhabdus laumondii subsp. laumondii (strain DSM 15139 / CIP 105565 / TT01) (Photorhabdus luminescens subsp. laumondii).